The following is a 446-amino-acid chain: Histidinol dehydrogenase homolog (446 aa).

His-266 is a Zn(2+) binding site. Active-site proton acceptor residues include Glu-334 and His-335. His-427 serves as a coordination point for Zn(2+).

This sequence belongs to the histidinol dehydrogenase family. Zn(2+) serves as cofactor.

This Colwellia psychrerythraea (strain 34H / ATCC BAA-681) (Vibrio psychroerythus) protein is Histidinol dehydrogenase homolog.